A 408-amino-acid chain; its full sequence is LL-diaminopimelate aminotransferase (408 aa).

Positions 15 and 42 each coordinate substrate. Residues Tyr72, 108–109 (SK), Tyr132, Asn187, Tyr218, and 246–248 (SFS) contribute to the pyridoxal 5'-phosphate site. Substrate-binding residues include Lys109, Tyr132, and Asn187. Residue Lys249 is modified to N6-(pyridoxal phosphate)lysine. 2 residues coordinate pyridoxal 5'-phosphate: Arg257 and Asn291. Substrate contacts are provided by Asn291 and Arg387.

Belongs to the class-I pyridoxal-phosphate-dependent aminotransferase family. LL-diaminopimelate aminotransferase subfamily. As to quaternary structure, homodimer. Pyridoxal 5'-phosphate serves as cofactor.

It catalyses the reaction (2S,6S)-2,6-diaminopimelate + 2-oxoglutarate = (S)-2,3,4,5-tetrahydrodipicolinate + L-glutamate + H2O + H(+). Its pathway is amino-acid biosynthesis; L-lysine biosynthesis via DAP pathway; LL-2,6-diaminopimelate from (S)-tetrahydrodipicolinate (aminotransferase route): step 1/1. Functionally, involved in the synthesis of meso-diaminopimelate (m-DAP or DL-DAP), required for both lysine and peptidoglycan biosynthesis. Catalyzes the direct conversion of tetrahydrodipicolinate to LL-diaminopimelate. The polypeptide is LL-diaminopimelate aminotransferase (Prochlorococcus marinus (strain NATL2A)).